The following is a 179-amino-acid chain: Signal peptidase complex subunit 3 (179 aa).

Residues 1-12 (MHTVLTRGNATV) are Cytoplasmic-facing. Residues 13–33 (AYTLSVLACLTFSCFLSTVFL) traverse the membrane as a helical; Signal-anchor for type II membrane protein segment. Over 34–179 (DYRTDANINT…FPADYATSSI (146 aa)) the chain is Lumenal. Asn73 and Asn141 each carry an N-linked (GlcNAc...) asparagine glycan.

Belongs to the SPCS3 family. In terms of assembly, component of the signal peptidase complex (SPC) composed of a catalytic subunit twr/SEC11 and three accessory subunits Spase12/SPCS1, Spase25/SPCS2 and Spase22-23/SPCS3. The complex induces a local thinning of the ER membrane which is used to measure the length of the signal peptide (SP) h-region of protein substrates. This ensures the selectivity of the complex towards h-regions shorter than 18-20 amino acids.

It localises to the endoplasmic reticulum membrane. In terms of biological role, essential component of the signal peptidase complex (SPC) which catalyzes the cleavage of N-terminal signal sequences from nascent proteins as they are translocated into the lumen of the endoplasmic reticulum. Essential for the SPC catalytic activity, possibly by stabilizing and positioning the active center of the complex close to the lumenal surface. (Microbial infection) Plays an important role in infection by flaviviruses such as West Nile virus and Dengue virus type 2. This chain is Signal peptidase complex subunit 3 (Spase22-23), found in Drosophila melanogaster (Fruit fly).